The chain runs to 678 residues: Probable N-methylproline demethylase (678 aa).

FMN-binding positions include G59, Q102, R220, K299, and 321-322; that span reads TR. The [4Fe-4S] cluster site is built by C345, C351, and C363. A396, E415, Q423, R433, and A460 together coordinate FAD.

This sequence in the N-terminal section; belongs to the NADH:flavin oxidoreductase/NADH oxidase family. The cofactor is FMN. Requires FAD as cofactor. It depends on [4Fe-4S] cluster as a cofactor.

It carries out the reaction N-methyl-L-proline + NAD(+) + H2O = L-proline + formaldehyde + NADH + H(+). It participates in amine and polyamine degradation; stachydrine degradation. In terms of biological role, possible NADH-dependent oxidase, may function as a demethylase that converts N-methylproline to proline. The chain is Probable N-methylproline demethylase from Rhizobium meliloti (strain 1021) (Ensifer meliloti).